The primary structure comprises 477 residues: Probable periplasmic serine endoprotease DegP-like (477 aa).

Residues 1–27 form the signal peptide; that stretch reads MSIPRLKSYLMMFAAVLMLGQVLTAQA. Residues H117, D147, and S220 each act as charge relay system in the active site. Substrate-binding positions include 218 to 220 and 275 to 279; these read GNS and LGVVI. PDZ domains are found at residues 264–355 and 361–466; these read LKKD…IRNG and DISV…LRQG.

The protein belongs to the peptidase S1C family.

It localises to the periplasm. It catalyses the reaction Acts on substrates that are at least partially unfolded. The cleavage site P1 residue is normally between a pair of hydrophobic residues, such as Val-|-Val.. Might be efficient in the degradation of transiently denatured and unfolded proteins which accumulate in the periplasm following stress conditions. The chain is Probable periplasmic serine endoprotease DegP-like from Pseudomonas putida (strain ATCC 700007 / DSM 6899 / JCM 31910 / BCRC 17059 / LMG 24140 / F1).